Consider the following 379-residue polypeptide: Homoserine O-succinyltransferase (379 aa).

An AB hydrolase-1 domain is found at 51–360 (NAVLICHALS…DAPQGHDAFL (310 aa)). Ser-157 serves as the catalytic Nucleophile. Arg-227 lines the substrate pocket. Residues Asp-323 and His-356 contribute to the active site. Asp-357 is a substrate binding site.

Belongs to the AB hydrolase superfamily. MetX family. Homodimer.

It is found in the cytoplasm. The catalysed reaction is L-homoserine + succinyl-CoA = O-succinyl-L-homoserine + CoA. The protein operates within amino-acid biosynthesis; L-methionine biosynthesis via de novo pathway; O-succinyl-L-homoserine from L-homoserine: step 1/1. Its function is as follows. Transfers a succinyl group from succinyl-CoA to L-homoserine, forming succinyl-L-homoserine. In Pseudomonas syringae pv. tomato (strain ATCC BAA-871 / DC3000), this protein is Homoserine O-succinyltransferase.